Here is a 184-residue protein sequence, read N- to C-terminus: Large ribosomal subunit protein bL9 (184 aa).

The disordered stretch occupies residues 156-184; sequence RQAKLQNQKSEQQEAEQDASKEAADADDS. The span at 173-184 shows a compositional bias: basic and acidic residues; it reads DASKEAADADDS.

It belongs to the bacterial ribosomal protein bL9 family.

Functionally, binds to the 23S rRNA. This chain is Large ribosomal subunit protein bL9, found in Wolbachia pipientis subsp. Culex pipiens (strain wPip).